We begin with the raw amino-acid sequence, 110 residues long: Small ribosomal subunit protein bS16 (110 aa).

The segment at 87-110 (ARQNPIKAVPRKERKAQAEAAAKG) is disordered.

This sequence belongs to the bacterial ribosomal protein bS16 family.

The polypeptide is Small ribosomal subunit protein bS16 (Bradyrhizobium sp. (strain BTAi1 / ATCC BAA-1182)).